The following is a 307-amino-acid chain: Ribosomal RNA small subunit methyltransferase H (307 aa).

S-adenosyl-L-methionine contacts are provided by residues 33–35 (GGY), aspartate 51, phenylalanine 82, aspartate 96, and glutamine 103.

The protein belongs to the methyltransferase superfamily. RsmH family.

It is found in the cytoplasm. The enzyme catalyses cytidine(1402) in 16S rRNA + S-adenosyl-L-methionine = N(4)-methylcytidine(1402) in 16S rRNA + S-adenosyl-L-homocysteine + H(+). Specifically methylates the N4 position of cytidine in position 1402 (C1402) of 16S rRNA. This Rickettsia africae (strain ESF-5) protein is Ribosomal RNA small subunit methyltransferase H.